We begin with the raw amino-acid sequence, 524 residues long: Translation initiation factor eIF2B subunit delta (524 aa).

Residues 1 to 155 (MAAVAVAVRE…EHTPADDPTL (155 aa)) are disordered. Residue Ala-2 is modified to N-acetylalanine. Composition is skewed to basic and acidic residues over residues 8 to 20 (VREE…KTEL) and 31 to 40 (LTQEEKLQLR). Residue Ser-12 is modified to Phosphoserine. Residues 41 to 51 (KEKKQQKKKRK) show a composition bias toward basic residues. Residue Thr-86 is modified to Phosphothreonine. Residues 96 to 121 (SKAELRAERRAKQEAERALKQARKGE) are compositionally biased toward basic and acidic residues. Positions 130-140 (CPSTAGETTSG) are enriched in polar residues. The may bind the chemical integrated stress response (ISR) inhibitor ISRIB stretch occupies residues 171–180 (RKDYGSKVSL).

The protein belongs to the eIF-2B alpha/beta/delta subunits family. Component of the translation initiation factor 2B (eIF2B) complex which is a heterodecamer of two sets of five different subunits: alpha, beta, gamma, delta and epsilon. Subunits alpha, beta and delta comprise a regulatory subcomplex and subunits epsilon and gamma comprise a catalytic subcomplex. Within the complex, the hexameric regulatory complex resides at the center, with the two heterodimeric catalytic subcomplexes bound on opposite sides.

The protein localises to the cytoplasm. It is found in the cytosol. Activated by the chemical integrated stress response (ISR) inhibitor ISRIB which stimulates guanine nucleotide exchange factor activity for both phosphorylated and unphosphorylated eIF2. In terms of biological role, acts as a component of the translation initiation factor 2B (eIF2B) complex, which catalyzes the exchange of GDP for GTP on eukaryotic initiation factor 2 (eIF2) gamma subunit. Its guanine nucleotide exchange factor activity is repressed when bound to eIF2 complex phosphorylated on the alpha subunit, thereby limiting the amount of methionyl-initiator methionine tRNA available to the ribosome and consequently global translation is repressed. The sequence is that of Translation initiation factor eIF2B subunit delta (Eif2b4) from Mus musculus (Mouse).